A 42-amino-acid polypeptide reads, in one-letter code: Iota-conotoxin-like R11.1 (42 aa).

Disulfide bonds link Cys-5/Cys-19, Cys-12/Cys-22, Cys-18/Cys-27, and Cys-21/Cys-36.

Belongs to the conotoxin I1 superfamily. As to expression, expressed by the venom duct.

The protein localises to the secreted. Functionally, iota-conotoxins bind to voltage-gated sodium channels (Nav) and act as agonists by shifting the voltage-dependence of activation to more hyperpolarized levels. Produces general excitatory symptoms. The protein is Iota-conotoxin-like R11.1 of Conus radiatus (Rayed cone).